The primary structure comprises 355 residues: Ribosomal RNA large subunit methyltransferase M (355 aa).

S-adenosyl-L-methionine contacts are provided by residues Ser191, 224 to 227, Asp243, Asp263, and Asp279; that span reads APGG. Residue Lys308 is the Proton acceptor of the active site.

It belongs to the class I-like SAM-binding methyltransferase superfamily. RNA methyltransferase RlmE family. RlmM subfamily. In terms of assembly, monomer.

It is found in the cytoplasm. It catalyses the reaction cytidine(2498) in 23S rRNA + S-adenosyl-L-methionine = 2'-O-methylcytidine(2498) in 23S rRNA + S-adenosyl-L-homocysteine + H(+). Its function is as follows. Catalyzes the 2'-O-methylation at nucleotide C2498 in 23S rRNA. The sequence is that of Ribosomal RNA large subunit methyltransferase M from Stenotrophomonas maltophilia (strain K279a).